Reading from the N-terminus, the 512-residue chain is Cobyric acid synthase (512 aa).

The region spanning 254–455 is the GATase cobBQ-type domain; sequence EIDIAVVKLP…LHGLFDNKAL (202 aa). Cysteine 335 acts as the Nucleophile in catalysis. Histidine 447 is a catalytic residue.

Belongs to the CobB/CobQ family. CobQ subfamily.

It functions in the pathway cofactor biosynthesis; adenosylcobalamin biosynthesis. In terms of biological role, catalyzes amidations at positions B, D, E, and G on adenosylcobyrinic A,C-diamide. NH(2) groups are provided by glutamine, and one molecule of ATP is hydrogenolyzed for each amidation. The polypeptide is Cobyric acid synthase (Desulforamulus reducens (strain ATCC BAA-1160 / DSM 100696 / MI-1) (Desulfotomaculum reducens)).